A 400-amino-acid chain; its full sequence is Apolipoprotein N-acyltransferase (400 aa).

Transmembrane regions (helical) follow at residues 16–36, 42–62, 67–87, 97–117, and 123–143; these read AISP…VLFV, FGVG…GLRY, FLIP…FYIG, FAFL…IVPE, and SYIG…WILF. One can recognise a CN hydrolase domain in the interval 181–400; it reads AQSAVSQDFD…AIITPFVSSR (220 aa). Glu222 acts as the Proton acceptor in catalysis. Lys283 is an active-site residue. The active-site Nucleophile is Cys332. The helical transmembrane segment at 377–397 threads the bilayer; it reads YGSVIFHATNLSPAAIITPFV.

It belongs to the CN hydrolase family. Apolipoprotein N-acyltransferase subfamily.

It localises to the cell inner membrane. It carries out the reaction N-terminal S-1,2-diacyl-sn-glyceryl-L-cysteinyl-[lipoprotein] + a glycerophospholipid = N-acyl-S-1,2-diacyl-sn-glyceryl-L-cysteinyl-[lipoprotein] + a 2-acyl-sn-glycero-3-phospholipid + H(+). The protein operates within protein modification; lipoprotein biosynthesis (N-acyl transfer). Catalyzes the phospholipid dependent N-acylation of the N-terminal cysteine of apolipoprotein, the last step in lipoprotein maturation. This is Apolipoprotein N-acyltransferase from Helicobacter hepaticus (strain ATCC 51449 / 3B1).